The chain runs to 223 residues: Phosphoribosylformylglycinamidine synthase subunit PurQ (223 aa).

In terms of domain architecture, Glutamine amidotransferase type-1 spans 4–223 (FAVVVFPGTN…FKGMVEWVRS (220 aa)). Residue C85 is the Nucleophile of the active site. Catalysis depends on residues H196 and E198.

In terms of assembly, part of the FGAM synthase complex composed of 1 PurL, 1 PurQ and 2 PurS subunits.

It localises to the cytoplasm. It carries out the reaction N(2)-formyl-N(1)-(5-phospho-beta-D-ribosyl)glycinamide + L-glutamine + ATP + H2O = 2-formamido-N(1)-(5-O-phospho-beta-D-ribosyl)acetamidine + L-glutamate + ADP + phosphate + H(+). The catalysed reaction is L-glutamine + H2O = L-glutamate + NH4(+). It participates in purine metabolism; IMP biosynthesis via de novo pathway; 5-amino-1-(5-phospho-D-ribosyl)imidazole from N(2)-formyl-N(1)-(5-phospho-D-ribosyl)glycinamide: step 1/2. Functionally, part of the phosphoribosylformylglycinamidine synthase complex involved in the purines biosynthetic pathway. Catalyzes the ATP-dependent conversion of formylglycinamide ribonucleotide (FGAR) and glutamine to yield formylglycinamidine ribonucleotide (FGAM) and glutamate. The FGAM synthase complex is composed of three subunits. PurQ produces an ammonia molecule by converting glutamine to glutamate. PurL transfers the ammonia molecule to FGAR to form FGAM in an ATP-dependent manner. PurS interacts with PurQ and PurL and is thought to assist in the transfer of the ammonia molecule from PurQ to PurL. This Pyrococcus furiosus (strain ATCC 43587 / DSM 3638 / JCM 8422 / Vc1) protein is Phosphoribosylformylglycinamidine synthase subunit PurQ.